The sequence spans 295 residues: G1/S-specific cyclin-D1 (295 aa).

In terms of domain architecture, Cyclin N-terminal spans 28–152 (LRAMLKTEET…LLVNKLKWNL (125 aa)). Residues 262–283 (AQQNVDPKATEEEGEVEEEAGL) are disordered. Lys-269 participates in a covalent cross-link: Glycyl lysine isopeptide (Lys-Gly) (interchain with G-Cter in ubiquitin). Thr-286 is subject to Phosphothreonine.

Belongs to the cyclin family. Cyclin D subfamily. In terms of assembly, interacts with either CDK4 or CDK6 protein kinase to form a serine/threonine kinase holoenzyme complex. The cyclin subunit imparts substrate specificity to the complex. Component of the ternary complex CCND1/CDK4/CDKN1B required for nuclear translocation and modulation of CDK4-mediated kinase activity. Interacts directly with CDKN1B. Can form similar complexes with either CDKN1A or CDKN2A. Interacts with UHRF2; the interaction ubiquitinates CCND1 and appears to occur independently of phosphorylation. Interacts with USP2. Interacts (via cyclin N-terminal domain) with INSM1 (via N-terminal region); the interaction competes with the binding of CCND1 to CDK4 during cell cycle progression and inhibits CDK4 activity. Interacts with CDK4; the interaction is prevented with the binding of CCND1 to INSM1 during cell cycle progression. Phosphorylation at Thr-286 by MAP kinases is required for ubiquitination and degradation by the DCX(AMBRA1) complex. It also plays an essential role for recognition by the FBXO31 component of SCF (SKP1-cullin-F-box) protein ligase complex following DNA damage. In terms of processing, ubiquitinated at Lys-269 by the DCX(AMBRA1) complex during the transition from G1 to S cell phase, leading to its degradation: ubiquitination is dependent on Thr-286 phosphorylation. The DCX(AMBRA1) complex represents the major regulator of CCND1 stability during the G1/S transition. Also ubiquitinated by the SCF(FBXO4) and Cul7-RING(FBXW8) ubiquitin-protein ligase complexes. Following DNA damage it is ubiquitinated by the SCF(FBXO31) protein ligase complex. SCF(FBXO31) ubiquitination is dependent on Thr-286 phosphorylation. Ubiquitinated also by UHRF2 apparently in a phosphorylation-independent manner. Ubiquitination leads to its degradation and G1 arrest. Deubiquitinated by USP2; leading to its stabilization. As to expression, expressed in the intestinal epithelium.

The protein localises to the nucleus. The protein resides in the cytoplasm. It localises to the nucleus membrane. In terms of biological role, regulatory component of the cyclin D1-CDK4 (DC) complex that phosphorylates and inhibits members of the retinoblastoma (RB) protein family including RB1 and regulates the cell-cycle during G(1)/S transition. Phosphorylation of RB1 allows dissociation of the transcription factor E2F from the RB/E2F complex and the subsequent transcription of E2F target genes which are responsible for the progression through the G(1) phase. Hypophosphorylates RB1 in early G(1) phase. Cyclin D-CDK4 complexes are major integrators of various mitogenenic and antimitogenic signals. Also a substrate for SMAD3, phosphorylating SMAD3 in a cell-cycle-dependent manner and repressing its transcriptional activity. Component of the ternary complex, cyclin D1/CDK4/CDKN1B, required for nuclear translocation and activity of the cyclin D-CDK4 complex. Exhibits transcriptional corepressor activity with INSM1 on the NEUROD1 and INS promoters in a cell cycle-independent manner. The chain is G1/S-specific cyclin-D1 (Ccnd1) from Mus musculus (Mouse).